Here is a 515-residue protein sequence, read N- to C-terminus: Histidine ammonia-lyase (515 aa).

Residues 142-144 (ASG) constitute a cross-link (5-imidazolinone (Ala-Gly)). Ser-143 bears the 2,3-didehydroalanine (Ser) mark.

Belongs to the PAL/histidase family. Post-translationally, contains an active site 4-methylidene-imidazol-5-one (MIO), which is formed autocatalytically by cyclization and dehydration of residues Ala-Ser-Gly.

The protein resides in the cytoplasm. It catalyses the reaction L-histidine = trans-urocanate + NH4(+). It functions in the pathway amino-acid degradation; L-histidine degradation into L-glutamate; N-formimidoyl-L-glutamate from L-histidine: step 1/3. The protein is Histidine ammonia-lyase of Bradyrhizobium sp. (strain ORS 278).